We begin with the raw amino-acid sequence, 314 residues long: tRNA dimethylallyltransferase (314 aa).

9–16 (GPTAVGKT) provides a ligand contact to ATP. 11 to 16 (TAVGKT) contributes to the substrate binding site. Residues 34–37 (DSMQ) are interaction with substrate tRNA.

It belongs to the IPP transferase family. Monomer. Mg(2+) is required as a cofactor.

It catalyses the reaction adenosine(37) in tRNA + dimethylallyl diphosphate = N(6)-dimethylallyladenosine(37) in tRNA + diphosphate. Catalyzes the transfer of a dimethylallyl group onto the adenine at position 37 in tRNAs that read codons beginning with uridine, leading to the formation of N6-(dimethylallyl)adenosine (i(6)A). The sequence is that of tRNA dimethylallyltransferase from Clostridium tetani (strain Massachusetts / E88).